The sequence spans 598 residues: MAPLSLTDIVSALPSEEDAWGPPVPTGNHLDGVPYAPFSKGDKLGRMADWGADSKDSRERGRQAYNRNYRDQQVYGAGTSSLFAVQVAEDESSFSVVDNTRTSVKTRGFGRGGGTIFRGRGQRGGAQRGRGGAFQRPAGGRGGQAGGDRYYDQRGGRGNRGRRFGWKDYDKPQRNRDSSVAIRPEWSMLEEIDFSRLSKLNLETPDGEDLDNYGFLYYYDRSYDKAPVKNTERRLRALERAAYNVTTSADPVIQELAEKDEATVFATADILSMLMCASRSVYSWDIVIVKHGNKIYFDKRDNASIDLVTVNENAADAPMEASEGQAKHDSINTPGALALEATIINHNFALQTVVESDSAKVEFSHPNPFYNPSEETEPLASKGFKYRRFDLSLEKDEEPVQIIVRTEIDAVLKNNISGEDQHVTLKALNEFDHKAQGAGGALDWRSKLYSQRGAVVATEMKNNNVKLARWTTQAILAKSDVMKLGFVTRANPRSATAHMILGVIGYKPREFALQMNLNMANGWGIVRTIIDLVNSLDARDEEEGDDAQEDKIKKYILVKDPNKSVVRLYSVPANTFEEEDDTGAKAEKDEESEEKDEE.

The interval Val-104–Ser-178 is disordered. Gly residues predominate over residues Phe-109 to Gly-132. Over residues Gly-165–Asp-177 the composition is skewed to basic and acidic residues. Residues Ser-304–Pro-318 form an RNA gate region. A disordered region spans residues Asn-574–Glu-598. Positions Asp-589–Glu-598 are enriched in acidic residues.

The protein belongs to the eIF-3 subunit D family. As to quaternary structure, component of the eukaryotic translation initiation factor 3 (eIF-3) complex.

It localises to the cytoplasm. Functionally, mRNA cap-binding component of the eukaryotic translation initiation factor 3 (eIF-3) complex, which is involved in protein synthesis of a specialized repertoire of mRNAs and, together with other initiation factors, stimulates binding of mRNA and methionyl-tRNAi to the 40S ribosome. The eIF-3 complex specifically targets and initiates translation of a subset of mRNAs involved in cell proliferation. In the eIF-3 complex, eif3d specifically recognizes and binds the 7-methylguanosine cap of a subset of mRNAs. The polypeptide is Eukaryotic translation initiation factor 3 subunit D (Coccidioides immitis (strain RS) (Valley fever fungus)).